Here is a 442-residue protein sequence, read N- to C-terminus: tRNA modification GTPase MnmE (442 aa).

(6S)-5-formyl-5,6,7,8-tetrahydrofolate-binding residues include Arg27, Glu84, and Lys124. The TrmE-type G domain maps to Gly221–Glu366. Residues Asn231–Ser236, Ser250–Thr256, and Asp275–Gly278 each bind GTP. 2 residues coordinate Mg(2+): Ser235 and Thr256. Position 442 (Lys442) interacts with (6S)-5-formyl-5,6,7,8-tetrahydrofolate.

This sequence belongs to the TRAFAC class TrmE-Era-EngA-EngB-Septin-like GTPase superfamily. TrmE GTPase family. In terms of assembly, homodimer. Heterotetramer of two MnmE and two MnmG subunits. The cofactor is K(+).

The protein resides in the cytoplasm. In terms of biological role, exhibits a very high intrinsic GTPase hydrolysis rate. Involved in the addition of a carboxymethylaminomethyl (cmnm) group at the wobble position (U34) of certain tRNAs, forming tRNA-cmnm(5)s(2)U34. This is tRNA modification GTPase MnmE from Brucella melitensis biotype 1 (strain ATCC 23456 / CCUG 17765 / NCTC 10094 / 16M).